The following is a 578-amino-acid chain: Ribonuclease SLFN12 (578 aa).

S368 carries the post-translational modification Phosphoserine. The tract at residues 551–560 (AENLYQIIGI) is mediates interaction with PDE3A. At S573 the chain carries Phosphoserine.

It belongs to the Schlafen family. Subgroup II subfamily. As to quaternary structure, homodimer. Interacts with PDE3A; direct low affinity interaction which is stimulated by binding of 17beta-estradiol/E2 to PDE3A and that positively regulates the ribonuclease activity of SLFN12. Interacts with SERPINB12; as part of a pathway regulating cell differentiation. Post-translationally, phosphorylation at Ser-368 and Ser-573 negatively regulates the ribonuclease activity. Dephosphorylation is induced by the interaction with PDE3A and stimulates the rRNA ribonuclease activity.

It localises to the nucleus. Its subcellular location is the cytoplasm. The protein resides in the cytosol. Its function is as follows. Ribonuclease which is part of an E2/17beta-estradiol-induced pro-apoptotic signaling pathway. E2 stabilizes the PDE3A/SLFN12 complex in the cytosol, promoting the dephosphorylation of SLFN12 and activating its pro-apoptotic ribosomal RNA/rRNA ribonuclease activity. This apoptotic pathway might be relevant in tissues with high concentration of E2 and be for instance involved in placenta remodeling. May play a role in cell differentiation. The protein is Ribonuclease SLFN12 of Homo sapiens (Human).